An 885-amino-acid chain; its full sequence is Leucine--tRNA ligase (885 aa).

The 'HIGH' region signature appears at 53 to 63 (PYPSGKLHMGH). The 'KMSKS' region signature appears at 631 to 635 (KMSKS). Position 634 (lysine 634) interacts with ATP.

Belongs to the class-I aminoacyl-tRNA synthetase family.

It localises to the cytoplasm. The catalysed reaction is tRNA(Leu) + L-leucine + ATP = L-leucyl-tRNA(Leu) + AMP + diphosphate. This chain is Leucine--tRNA ligase, found in Psychrobacter sp. (strain PRwf-1).